We begin with the raw amino-acid sequence, 78 residues long: Translational regulator CsrA (78 aa).

It belongs to the CsrA/RsmA family. As to quaternary structure, homodimer; the beta-strands of each monomer intercalate to form a hydrophobic core, while the alpha-helices form wings that extend away from the core.

The protein resides in the cytoplasm. Its function is as follows. A translational regulator that binds mRNA to regulate translation initiation and/or mRNA stability. Usually binds in the 5'-UTR at or near the Shine-Dalgarno sequence preventing ribosome-binding, thus repressing translation. Its main target seems to be the major flagellin gene, while its function is anatagonized by FliW. The protein is Translational regulator CsrA of Borrelia recurrentis (strain A1).